Consider the following 98-residue polypeptide: NADH-ubiquinone oxidoreductase chain 4L (98 aa).

3 helical membrane passes run 1-21 (MSLT…GLLM), 29-49 (SLLC…VTIL), and 61-81 (IILL…LVMV).

This sequence belongs to the complex I subunit 4L family. As to quaternary structure, core subunit of respiratory chain NADH dehydrogenase (Complex I) which is composed of 45 different subunits.

The protein localises to the mitochondrion inner membrane. The enzyme catalyses a ubiquinone + NADH + 5 H(+)(in) = a ubiquinol + NAD(+) + 4 H(+)(out). Its function is as follows. Core subunit of the mitochondrial membrane respiratory chain NADH dehydrogenase (Complex I) which catalyzes electron transfer from NADH through the respiratory chain, using ubiquinone as an electron acceptor. Part of the enzyme membrane arm which is embedded in the lipid bilayer and involved in proton translocation. In Sturnira lilium (Lesser yellow-shouldered bat), this protein is NADH-ubiquinone oxidoreductase chain 4L (MT-ND4L).